The chain runs to 183 residues: Bifunctional protein PyrR (183 aa).

Substrate contacts are provided by residues 46–47 (TR), Arg-87, 107–115 (DDVIFSGRT), Arg-140, and Val-164. The PRPP-binding signature appears at 103–115 (VVLVDDVIFSGRT).

This sequence belongs to the purine/pyrimidine phosphoribosyltransferase family. PyrR subfamily.

The catalysed reaction is UMP + diphosphate = 5-phospho-alpha-D-ribose 1-diphosphate + uracil. Functionally, regulates the transcription of the pyrimidine nucleotide (pyr) operon in response to exogenous pyrimidines. Also displays a weak uracil phosphoribosyltransferase activity which is not physiologically significant. The protein is Bifunctional protein PyrR of Thermosynechococcus vestitus (strain NIES-2133 / IAM M-273 / BP-1).